The following is a 293-amino-acid chain: Small ribosomal subunit protein uS5 (293 aa).

Residues 1 to 56 (MADDAGAAGGPGGPGGPGMGGRGGFRGGFGSGVRGRGRGRGRGRGRGRGARGGKAE) form a disordered region. Residue Ala2 is modified to N-acetylalanine. A compositionally biased stretch (gly residues) spans 7–34 (AAGGPGGPGGPGMGGRGGFRGGFGSGVR). Residues 35-51 (GRGRGRGRGRGRGRGAR) are compositionally biased toward basic residues. Glycyl lysine isopeptide (Lys-Gly) (interchain with G-Cter in ubiquitin) cross-links involve residues Lys54 and Lys58. The region spanning 102-165 (LKDEVLKIMP…ILAKLSIVPV (64 aa)) is the S5 DRBM domain. A Phosphothreonine modification is found at Thr252. Lys263 is modified (N6-acetyllysine). Ser264 carries the post-translational modification Phosphoserine. Thr270 carries the phosphothreonine modification. Lys275 is subject to N6-acetyllysine; alternate. A Glycyl lysine isopeptide (Lys-Gly) (interchain with G-Cter in SUMO1); alternate cross-link involves residue Lys275. Residue Lys275 forms a Glycyl lysine isopeptide (Lys-Gly) (interchain with G-Cter in SUMO2); alternate linkage. Residue Lys275 forms a Glycyl lysine isopeptide (Lys-Gly) (interchain with G-Cter in ubiquitin); alternate linkage. Position 281 is a phosphoserine (Ser281).

It belongs to the universal ribosomal protein uS5 family. In terms of assembly, component of the small ribosomal subunit. Interacts with zinc finger protein ZNF277 (via zinc-finger domains); the interaction is direct; the interaction is extra-ribosomal. Interaction with ZNF277 competes with the binding of RPS2 to protein arginine methyltransferase PRMT3. Post-translationally, citrullinated by PADI4 in the Arg/Gly-rich region. In terms of processing, asymmetric arginine dimethylation by PRMT3 occurs at multiple sites in the Arg/Gly-rich region. Monoubiquitinated at Lys-54 and Lys-58 by RNF10 when a ribosome has stalled during translation, leading to its degradation by the proteasome. Deubiquitinated at Lys-54 and Lys-58 by USP10, preventing degradation by the proteasome and promoting 40S ribosome subunit recycling following ribosome dissociation.

It is found in the cytoplasm. The protein resides in the nucleus. The protein localises to the nucleolus. Functionally, component of the ribosome, a large ribonucleoprotein complex responsible for the synthesis of proteins in the cell. The small ribosomal subunit (SSU) binds messenger RNAs (mRNAs) and translates the encoded message by selecting cognate aminoacyl-transfer RNA (tRNA) molecules. The large subunit (LSU) contains the ribosomal catalytic site termed the peptidyl transferase center (PTC), which catalyzes the formation of peptide bonds, thereby polymerizing the amino acids delivered by tRNAs into a polypeptide chain. The nascent polypeptides leave the ribosome through a tunnel in the LSU and interact with protein factors that function in enzymatic processing, targeting, and the membrane insertion of nascent chains at the exit of the ribosomal tunnel. Plays a role in the assembly and function of the 40S ribosomal subunit. Mutations in this protein affects the control of translational fidelity. Involved in nucleolar processing of pre-18S ribosomal RNA and ribosome assembly. The chain is Small ribosomal subunit protein uS5 (RPS2) from Bos taurus (Bovine).